Reading from the N-terminus, the 113-residue chain is Colipase (113 aa).

The signal sequence occupies residues 1–18; sequence MEKVLVLLLVSLLAVAYA. Positions 19-23 are cleaved as a propeptide — enterostatin, activation peptide; that stretch reads APGPR. 5 cysteine pairs are disulfide-bonded: Cys-35-Cys-46, Cys-41-Cys-57, Cys-45-Cys-79, Cys-67-Cys-87, and Cys-81-Cys-105.

It belongs to the colipase family. In terms of assembly, forms a 1:1 stoichiometric complex with pancreatic lipase. As to expression, expressed by the pancreas.

The protein localises to the secreted. In terms of biological role, colipase is a cofactor of pancreatic lipase. It allows the lipase to anchor itself to the lipid-water interface. Without colipase the enzyme is washed off by bile salts, which have an inhibitory effect on the lipase. Functionally, enterostatin has a biological activity as a satiety signal. This Mus musculus (Mouse) protein is Colipase.